Here is a 344-residue protein sequence, read N- to C-terminus: Dihydroorotase (344 aa).

2 residues coordinate Zn(2+): H13 and H15. Residues 15–17 (HVR) and N41 each bind substrate. K99, H136, and H174 together coordinate Zn(2+). K99 is subject to N6-carboxylysine. Residue H136 participates in substrate binding. Residue L219 participates in substrate binding. D247 serves as a coordination point for Zn(2+). Residue D247 is part of the active site. Residues H251 and A263 each coordinate substrate.

The protein belongs to the metallo-dependent hydrolases superfamily. DHOase family. Class II DHOase subfamily. Homodimer. It depends on Zn(2+) as a cofactor.

It carries out the reaction (S)-dihydroorotate + H2O = N-carbamoyl-L-aspartate + H(+). It functions in the pathway pyrimidine metabolism; UMP biosynthesis via de novo pathway; (S)-dihydroorotate from bicarbonate: step 3/3. Its function is as follows. Catalyzes the reversible cyclization of carbamoyl aspartate to dihydroorotate. The polypeptide is Dihydroorotase (Azoarcus sp. (strain BH72)).